We begin with the raw amino-acid sequence, 1468 residues long: DNA polymerase alpha catalytic subunit A (1468 aa).

Residues 1 to 12 (MSSKSEKLEKLR) show a composition bias toward basic and acidic residues. Disordered stretches follow at residues 1–34 (MSSKSEKLEKLRKLQAARNGTSIDDYEGDESDGD), 71–135 (GVEE…KKSI), and 166–205 (NLNSSPTSEFKSSIKRVNGNDESSHDAGISKKVKIDPDSS). At Ser-2 the chain carries N-acetylserine. Ser-31 is subject to Phosphoserine. The segment covering 71 to 80 (GVEEDWREVD) has biased composition (basic and acidic residues). Ser-82, Ser-83, Ser-84, Ser-169, and Ser-170 each carry phosphoserine. Over residues 166–176 (NLNSSPTSEFK) the composition is skewed to polar residues. Thr-172 carries the phosphothreonine modification. Residues 183–205 (NGNDESSHDAGISKKVKIDPDSS) are compositionally biased toward basic and acidic residues. Phosphoserine is present on residues Ser-240 and Ser-274. The interval 256–275 (LANPPSAQSLADEEDDEDSD) is disordered. Residues 266-275 (ADEEDDEDSD) show a composition bias toward acidic residues. Residues Thr-309 and Thr-313 each carry the phosphothreonine modification. The tract at residues 813–837 (PDKEGNRSRAQKQRQNEENADAPVN) is disordered. The tract at residues 1246-1381 (KKYFRREGGN…CTGVMRYKYS (136 aa)) is DNA-binding. Zn(2+) is bound by residues Cys-1287, Cys-1290, Cys-1314, Cys-1317, Cys-1348, Cys-1353, Cys-1367, and Cys-1372. A CysA-type zinc finger spans residues 1287–1317 (CPSCDKRFPFGGIVSSNYYRVSYNGLQCKHC). The short motif at 1348–1372 (CDDSTCGIVTRQVSVFGKRCLNDGC) is the CysB motif element.

This sequence belongs to the DNA polymerase type-B family. As to quaternary structure, DNA polymerase alpha:primase is a four subunit enzyme complex, which is assembled throughout the cell cycle, and consists of the two DNA polymerase subunits A POL1 and B POL12, and the DNA primase large PRI2 and small PRI1 subunits. Subunit B POL12 binds to subunit A POL1. POL1 interacts with CDC13, POB3, SPT16 and MCM10.

The protein resides in the nucleus. It carries out the reaction DNA(n) + a 2'-deoxyribonucleoside 5'-triphosphate = DNA(n+1) + diphosphate. In terms of biological role, catalytic component of DNA polymerase alpha, which in complex with DNA primase (DNA polymerase alpha:primase) constitutes a replicative polymerase. POL1 has a role in promoting telomere replication during interaction with CDC13. The polypeptide is DNA polymerase alpha catalytic subunit A (POL1) (Saccharomyces cerevisiae (strain ATCC 204508 / S288c) (Baker's yeast)).